A 264-amino-acid chain; its full sequence is MDSRPIGVFDSGVGGLTVLKRLIQVLPEEDYIYFGDTKRVPYGDRSKEEIELFAGQIINFMKEKNVKAVVIACNTTCATIDKGKYDIELFDVLKAGAESGVYCTKNKKVGVIATKRTVESRSYEINIKSINPQIEVYQKACPEFVPLIEKGLYNSHLAYKAAKDCLEEFKGKEIDTLILGCTHYPLMEPIIKAIMGDGVKVVDPAVRLSHEVKEYLERSRILNFGKKGKIEFFVSGDAENFKRAAEMVLGKKIDEVFIVDIERY.

Substrate contacts are provided by residues 10–11 and 42–43; these read DS and YG. Residue cysteine 73 is the Proton donor/acceptor of the active site. Position 74-75 (74-75) interacts with substrate; the sequence is NT. Residue cysteine 181 is the Proton donor/acceptor of the active site. 182–183 is a binding site for substrate; the sequence is TH.

It belongs to the aspartate/glutamate racemases family.

The catalysed reaction is L-glutamate = D-glutamate. It participates in cell wall biogenesis; peptidoglycan biosynthesis. In terms of biological role, provides the (R)-glutamate required for cell wall biosynthesis. The polypeptide is Glutamate racemase 2 (Caldanaerobacter subterraneus subsp. tengcongensis (strain DSM 15242 / JCM 11007 / NBRC 100824 / MB4) (Thermoanaerobacter tengcongensis)).